The primary structure comprises 49 residues: Large ribosomal subunit protein bL32 (49 aa).

Belongs to the bacterial ribosomal protein bL32 family.

The sequence is that of Large ribosomal subunit protein bL32 from Helicobacter hepaticus (strain ATCC 51449 / 3B1).